Consider the following 534-residue polypeptide: Calcium-dependent protein kinase 18 (534 aa).

The interval Met1–His49 is disordered. Gly2 is lipidated: N-myristoyl glycine. Residues Gly14 to Lys29 show a composition bias toward polar residues. Over residues Asn36–Leu47 the composition is skewed to basic residues. The Protein kinase domain maps to Tyr71–Val331. Residues Leu77–Thr85 and Lys100 each bind ATP. The active-site Proton acceptor is Asp197. Ser237 is modified (phosphoserine). The autoinhibitory domain stretch occupies residues Ala337–Leu367. EF-hand domains are found at residues Asp374 to Trp409, Leu411 to Leu446, Lys453 to Ile488, and Leu491 to Lys518. Ca(2+) is bound by residues Asp387, Asp389, Asn391, Ser393, Glu398, Asp424, Asn426, Asp428, Glu435, Asp466, Asp468, Asp470, Glu477, Asp496, Asp498, Asp500, and Arg502. Ser504 is modified (phosphoserine). Position 507 (Glu507) interacts with Ca(2+).

Belongs to the protein kinase superfamily. Ser/Thr protein kinase family. CDPK subfamily.

The protein localises to the membrane. The catalysed reaction is L-seryl-[protein] + ATP = O-phospho-L-seryl-[protein] + ADP + H(+). It catalyses the reaction L-threonyl-[protein] + ATP = O-phospho-L-threonyl-[protein] + ADP + H(+). Activated by calcium. Autophosphorylation may play an important role in the regulation of the kinase activity. Functionally, may play a role in signal transduction pathways that involve calcium as a second messenger. In Arabidopsis thaliana (Mouse-ear cress), this protein is Calcium-dependent protein kinase 18 (CPK18).